We begin with the raw amino-acid sequence, 440 residues long: NADH-quinone oxidoreductase subunit D (440 aa).

Belongs to the complex I 49 kDa subunit family. In terms of assembly, NDH-1 is composed of 14 different subunits. Subunits NuoB, C, D, E, F, and G constitute the peripheral sector of the complex.

The protein localises to the cell membrane. The enzyme catalyses a quinone + NADH + 5 H(+)(in) = a quinol + NAD(+) + 4 H(+)(out). NDH-1 shuttles electrons from NADH, via FMN and iron-sulfur (Fe-S) centers, to quinones in the respiratory chain. The immediate electron acceptor for the enzyme in this species is believed to be a menaquinone. Couples the redox reaction to proton translocation (for every two electrons transferred, four hydrogen ions are translocated across the cytoplasmic membrane), and thus conserves the redox energy in a proton gradient. This is NADH-quinone oxidoreductase subunit D from Acidothermus cellulolyticus (strain ATCC 43068 / DSM 8971 / 11B).